The following is a 227-amino-acid chain: Ribose-5-phosphate isomerase A (227 aa).

Substrate-binding positions include threonine 26–threonine 29, aspartate 82–aspartate 85, and lysine 95–glycine 98. Residue glutamate 104 is the Proton acceptor of the active site. Lysine 122 provides a ligand contact to substrate.

This sequence belongs to the ribose 5-phosphate isomerase family. Homodimer.

The enzyme catalyses aldehydo-D-ribose 5-phosphate = D-ribulose 5-phosphate. It functions in the pathway carbohydrate degradation; pentose phosphate pathway; D-ribose 5-phosphate from D-ribulose 5-phosphate (non-oxidative stage): step 1/1. In terms of biological role, catalyzes the reversible conversion of ribose-5-phosphate to ribulose 5-phosphate. This chain is Ribose-5-phosphate isomerase A, found in Streptococcus equi subsp. equi (strain 4047).